Here is a 395-residue protein sequence, read N- to C-terminus: Phosphopentomutase (395 aa).

Mn(2+) contacts are provided by Asp-16, Asp-289, His-294, Asp-330, His-331, and His-342.

It belongs to the phosphopentomutase family. Mn(2+) serves as cofactor.

The protein localises to the cytoplasm. It carries out the reaction 2-deoxy-alpha-D-ribose 1-phosphate = 2-deoxy-D-ribose 5-phosphate. The catalysed reaction is alpha-D-ribose 1-phosphate = D-ribose 5-phosphate. The protein operates within carbohydrate degradation; 2-deoxy-D-ribose 1-phosphate degradation; D-glyceraldehyde 3-phosphate and acetaldehyde from 2-deoxy-alpha-D-ribose 1-phosphate: step 1/2. Functionally, isomerase that catalyzes the conversion of deoxy-ribose 1-phosphate (dRib-1-P) and ribose 1-phosphate (Rib-1-P) to deoxy-ribose 5-phosphate (dRib-5-P) and ribose 5-phosphate (Rib-5-P), respectively. This chain is Phosphopentomutase, found in Geobacillus kaustophilus (strain HTA426).